Reading from the N-terminus, the 274-residue chain is Protein CIMAP1C (274 aa).

Residues 1 to 27 (MKLPKGTRSSVYFAQHPEKEPLPSRQE) form a disordered region. The span at 16–27 (HPEKEPLPSRQE) shows a compositional bias: basic and acidic residues. STPGR repeat units lie at residues 199 to 224 (PGPTTYARPEPSIYQNRSPTYSMAKR) and 235 to 260 (PGPGSHEVQQVTVHKPHIPAFTMGIK).

The protein belongs to the CIMAP family.

This is Protein CIMAP1C from Homo sapiens (Human).